The primary structure comprises 143 residues: Flagellar assembly factor FliW (143 aa).

It belongs to the FliW family. In terms of assembly, interacts with translational regulator CsrA and flagellin(s).

It localises to the cytoplasm. In terms of biological role, acts as an anti-CsrA protein, binds CsrA and prevents it from repressing translation of its target genes, one of which is flagellin. Binds to flagellin and participates in the assembly of the flagellum. The polypeptide is Flagellar assembly factor FliW (Bacillus velezensis (strain DSM 23117 / BGSC 10A6 / LMG 26770 / FZB42) (Bacillus amyloliquefaciens subsp. plantarum)).